We begin with the raw amino-acid sequence, 376 residues long: Putative glutamate--cysteine ligase 2 (376 aa).

It belongs to the glutamate--cysteine ligase type 2 family. YbdK subfamily.

It carries out the reaction L-cysteine + L-glutamate + ATP = gamma-L-glutamyl-L-cysteine + ADP + phosphate + H(+). ATP-dependent carboxylate-amine ligase which exhibits weak glutamate--cysteine ligase activity. The sequence is that of Putative glutamate--cysteine ligase 2 from Mycolicibacterium paratuberculosis (strain ATCC BAA-968 / K-10) (Mycobacterium paratuberculosis).